The primary structure comprises 63 residues: MAKVHGSLARAGKVKSQTPKVEKTEKPKKPKGRAYKRLLYTRRFVNVTLVNGKRRMNPGPSVQ.

The interval 1–35 (MAKVHGSLARAGKVKSQTPKVEKTEKPKKPKGRAY) is disordered. S16 bears the Phosphoserine mark. T48 carries the phosphothreonine modification.

It belongs to the eukaryotic ribosomal protein eS30 family. In terms of assembly, component of the small ribosomal subunit (SSU). Mature yeast ribosomes consist of a small (40S) and a large (60S) subunit. The 40S small subunit contains 1 molecule of ribosomal RNA (18S rRNA) and 33 different proteins (encoded by 57 genes). The large 60S subunit contains 3 rRNA molecules (25S, 5.8S and 5S rRNA) and 46 different proteins (encoded by 81 genes).

The protein resides in the cytoplasm. In terms of biological role, component of the ribosome, a large ribonucleoprotein complex responsible for the synthesis of proteins in the cell. The small ribosomal subunit (SSU) binds messenger RNAs (mRNAs) and translates the encoded message by selecting cognate aminoacyl-transfer RNA (tRNA) molecules. The large subunit (LSU) contains the ribosomal catalytic site termed the peptidyl transferase center (PTC), which catalyzes the formation of peptide bonds, thereby polymerizing the amino acids delivered by tRNAs into a polypeptide chain. The nascent polypeptides leave the ribosome through a tunnel in the LSU and interact with protein factors that function in enzymatic processing, targeting, and the membrane insertion of nascent chains at the exit of the ribosomal tunnel. The chain is Small ribosomal subunit protein eS30B from Saccharomyces cerevisiae (strain ATCC 204508 / S288c) (Baker's yeast).